The following is a 257-amino-acid chain: MSVPAGSVSCLANALLNLRSSTDYNADHGVKNSILNFSNSKDASRFDGSESWSSSVLDKNQFIVAGSDSVKHFVAISTQGRGDHDQWVTSYKLRYTLDNVNWVEYNNGEIINANKDRNSIVTINFNPPIKARSIAIHPQTYNNHISLRWELYALPVKSYSNPSVQVGEVSIGDRSLNSGTGSRTIVRHVKFPVEFLSVPIVSIGCKKVDAHTDNGQMRWEGKSENITTKGFDLTFITWGNNAVYDLTFDYVAVEFNN.

The beta-sandwich stretch occupies residues 1-155 (MSVPAGSVSC…SLRWELYALP (155 aa)). The region spanning 10–154 (CLANALLNLR…ISLRWELYAL (145 aa)) is the F5/8 type C domain. Ca(2+) contacts are provided by asparagine 39, serine 40, and aspartate 47. The Cell attachment site signature appears at 81–83 (RGD). Histidine 84 is subject to Phosphohistidine. The segment at 156-162 (VKSYSNP) is linker. The lectin-like stretch occupies residues 163–257 (SVQVGEVSIG…FDYVAVEFNN (95 aa)). A carbohydrate is bound by residues aspartate 209, arginine 218, and tryptophan 238.

Homotrimer. The N-terminus is blocked. Maturing spore cells.

Its function is as follows. Galactose-binding lectin. May be necessary for the primary process of spore formation and may be involved in spore coat formation. In Dictyostelium discoideum (Social amoeba), this protein is Discoidin-2 (dscE).